The primary structure comprises 282 residues: 2,3,4,5-tetrahydropyridine-2,6-dicarboxylate N-succinyltransferase (282 aa).

Substrate is bound by residues arginine 109 and aspartate 146.

The protein belongs to the transferase hexapeptide repeat family. As to quaternary structure, homotrimer.

The protein resides in the cytoplasm. It catalyses the reaction (S)-2,3,4,5-tetrahydrodipicolinate + succinyl-CoA + H2O = (S)-2-succinylamino-6-oxoheptanedioate + CoA. It participates in amino-acid biosynthesis; L-lysine biosynthesis via DAP pathway; LL-2,6-diaminopimelate from (S)-tetrahydrodipicolinate (succinylase route): step 1/3. This Bartonella henselae (strain ATCC 49882 / DSM 28221 / CCUG 30454 / Houston 1) (Rochalimaea henselae) protein is 2,3,4,5-tetrahydropyridine-2,6-dicarboxylate N-succinyltransferase.